Here is a 787-residue protein sequence, read N- to C-terminus: Protocadherin beta-15 (787 aa).

An N-terminal signal peptide occupies residues 1-26; sequence MEPAGERFPEQRQVLILLLLLEVTLA. Residues 27–690 are Extracellular-facing; it reads GWEPRRYSVM…AQADSLTVYL (664 aa). Cadherin domains are found at residues 35–133, 138–242, 247–347, 352–451, and 456–561; these read VMEE…SPEF, ITLK…APEF, YEVQ…FPEL, LTSP…APAF, and YTLF…SPFV. N-linked (GlcNAc...) asparagine glycans are attached at residues Asn-418 and Asn-436. A glycan (N-linked (GlcNAc...) asparagine) is linked at Asn-567. Residues 568 to 671 enclose the Cadherin 6 domain; the sequence is GSAPCTELVP…LVDGFSQPYL (104 aa). Residues 691–711 form a helical membrane-spanning segment; that stretch reads VVALASVSSLFLFSVLLFVAV. The Cytoplasmic portion of the chain corresponds to 712–787; it reads RLCRRSRAAS…DSRRKSEFLE (76 aa).

It localises to the cell membrane. Functionally, potential calcium-dependent cell-adhesion protein. May be involved in the establishment and maintenance of specific neuronal connections in the brain. The sequence is that of Protocadherin beta-15 (PCDHB15) from Pan troglodytes (Chimpanzee).